The sequence spans 497 residues: Solute carrier family 2, facilitated glucose transporter member 6 (497 aa).

The Cytoplasmic portion of the chain corresponds to 1-36 (MQEPLLRTEGLDYDTFPEVPATPGERERAGALKNRR). Positions 5 to 6 (LL) match the Dileucine internalization motif motif. The chain crosses the membrane as a helical span at residues 37–57 (VFLATFAAVLGNFSFGYALVY). Topologically, residues 58–80 (TSPVIPELKLSSDPALHLDKIQA) are extracellular. The chain crosses the membrane as a helical span at residues 81–101 (SWFGSVFTLGAAAGGLSAMLL). The Cytoplasmic segment spans residues 102–115 (NDLLGRKLSIMFSA). Residues 116–136 (VPSAIGYAIMAGARGLWMLLL) traverse the membrane as a helical segment. Over 137–138 (GR) the chain is Extracellular. The chain crosses the membrane as a helical span at residues 139-159 (MLTGFAGGLTAACIPVYVSEI). At 160–171 (APPDVRGALGAT) the chain is on the cytoplasmic side. Residues 172–192 (PQLMAVFGSLSLYALGLLLPW) form a helical membrane-spanning segment. A D-hexose is bound at residue Q173. A topological domain (extracellular) is located at residue R193. Residues 194-214 (WLAVAGEGPVLIMILLLSFMP) traverse the membrane as a helical segment. The Cytoplasmic portion of the chain corresponds to 215 to 273 (NSPRFLLSKSRDEEALQALTWLRADSEVHWEFEQIQDNVRRQSSRVSWAEAREPRVYRP). A helical membrane pass occupies residues 274 to 294 (VLIAVLMRFLQQLTGITPILV). Position 284–285 (284–285 (QQ)) interacts with a D-hexose. At 295–312 (YLQTIFDNTSVVLPSQQD) the chain is on the extracellular side. The N-linked (GlcNAc...) asparagine glycan is linked to N302. The helical transmembrane segment at 313–333 (AAIVGAVRLLSVLIAAVTMDL) threads the bilayer. Topologically, residues 334-337 (AGRK) are cytoplasmic. A helical membrane pass occupies residues 338-358 (VLLYVSASVMFAANLTLGLYV). Over 359-385 (QFVPRPLTPNSTVEIVTLGDTAFNYLT) the chain is Extracellular. N368 carries an N-linked (GlcNAc...) asparagine glycan. A helical transmembrane segment spans residues 386 to 406 (LIPLLATMLFIMGYAMGWGPI). Residues 407–425 (TWLLMSEVLPLRARGVASG) lie on the Cytoplasmic side of the membrane. An a D-hexose-binding site is contributed by W408. A helical membrane pass occupies residues 426–446 (LCVLVSWLTAFVLTNYFLLAV). A topological domain (extracellular) is located at residue N447. A helical membrane pass occupies residues 448 to 468 (AFGLQVPFFFFSAICLLSLLF). The Cytoplasmic segment spans residues 469–497 (TGCCVPETRGRSLEQIEAFFHTRRMSFRP).

It belongs to the major facilitator superfamily. Sugar transporter (TC 2.A.1.1) family. As to expression, mainly expressed in brain and spleen. Also expressed in lung, heart, muscle, liver, kidney, fat, whole blood, testes, ovaries and uterus.

Its subcellular location is the lysosome membrane. Functionally, probable sugar transporter that acts as a regulator of glycolysis in macrophages. Does not transport glucose. The polypeptide is Solute carrier family 2, facilitated glucose transporter member 6 (Mus musculus (Mouse)).